The sequence spans 462 residues: CUGBP Elav-like family member 3-B (462 aa).

RRM domains are found at residues 7–88, 95–175, and 377–455; these read IKLF…PADS, RKLF…FADT, and CNIF…LKRP.

The protein belongs to the CELF/BRUNOL family.

It localises to the nucleus. It is found in the cytoplasm. Functionally, RNA-binding protein that may be involved in the regulation of pre-mRNA alternative splicing. The polypeptide is CUGBP Elav-like family member 3-B (tnrc4-b) (Xenopus laevis (African clawed frog)).